We begin with the raw amino-acid sequence, 323 residues long: Rhazimal reductase 2 (323 aa).

An NADP(+)-binding site is contributed by D53. The Proton donor role is filled by Y58. Residues 167–168 (SN), Q189, 215–220 (WSPLLS), and 289–297 (DQIQQIPQR) each bind NADP(+).

This sequence belongs to the aldo/keto reductase family. Monomer.

It carries out the reaction rhazimol + NADP(+) = rhazimal + NADPH + 2 H(+). The protein operates within alkaloid biosynthesis. Oxidoreductase involved in the biosynthesis of akuammilan monoterpene indole alkaloids (MIAs) natural products, components with various biological properties such as antidiabetic, antibacterial, anti-inflammatory, anticancer, and antimalarial activities. Catalyzes the conversion of rhazimal to rhazimol. The polypeptide is Rhazimal reductase 2 (Alstonia scholaris (Dogbane)).